Here is a 297-residue protein sequence, read N- to C-terminus: Ribosomal RNA small subunit methyltransferase A (297 aa).

6 residues coordinate S-adenosyl-L-methionine: N28, L30, G55, E76, D101, and N126.

It belongs to the class I-like SAM-binding methyltransferase superfamily. rRNA adenine N(6)-methyltransferase family. RsmA subfamily.

It localises to the cytoplasm. It catalyses the reaction adenosine(1518)/adenosine(1519) in 16S rRNA + 4 S-adenosyl-L-methionine = N(6)-dimethyladenosine(1518)/N(6)-dimethyladenosine(1519) in 16S rRNA + 4 S-adenosyl-L-homocysteine + 4 H(+). Its function is as follows. Specifically dimethylates two adjacent adenosines (A1518 and A1519) in the loop of a conserved hairpin near the 3'-end of 16S rRNA in the 30S particle. May play a critical role in biogenesis of 30S subunits. In Latilactobacillus sakei subsp. sakei (strain 23K) (Lactobacillus sakei subsp. sakei), this protein is Ribosomal RNA small subunit methyltransferase A.